The following is a 216-amino-acid chain: 2-hydroxy-3-keto-5-methylthiopentenyl-1-phosphate phosphatase (216 aa).

It belongs to the HAD-like hydrolase superfamily. MtnX family.

The catalysed reaction is 2-hydroxy-5-methylsulfanyl-3-oxopent-1-enyl phosphate + H2O = 1,2-dihydroxy-5-(methylsulfanyl)pent-1-en-3-one + phosphate. It participates in amino-acid biosynthesis; L-methionine biosynthesis via salvage pathway; L-methionine from S-methyl-5-thio-alpha-D-ribose 1-phosphate: step 4/6. Functionally, dephosphorylates 2-hydroxy-3-keto-5-methylthiopentenyl-1-phosphate (HK-MTPenyl-1-P) yielding 1,2-dihydroxy-3-keto-5-methylthiopentene (DHK-MTPene). The polypeptide is 2-hydroxy-3-keto-5-methylthiopentenyl-1-phosphate phosphatase (Exiguobacterium sp. (strain ATCC BAA-1283 / AT1b)).